Consider the following 124-residue polypeptide: Fluoride-specific ion channel FluC (124 aa).

4 consecutive transmembrane segments (helical) span residues Met-1–Leu-21, Val-35–Leu-55, Leu-68–Phe-88, and Phe-99–Ile-119. 2 residues coordinate Na(+): Gly-75 and Thr-78.

This sequence belongs to the fluoride channel Fluc/FEX (TC 1.A.43) family.

It is found in the cell inner membrane. The enzyme catalyses fluoride(in) = fluoride(out). Na(+) is not transported, but it plays an essential structural role and its presence is essential for fluoride channel function. Its function is as follows. Fluoride-specific ion channel. Important for reducing fluoride concentration in the cell, thus reducing its toxicity. The polypeptide is Fluoride-specific ion channel FluC (Aquifex aeolicus (strain VF5)).